The following is a 450-amino-acid chain: Glucose-6-phosphate isomerase (450 aa).

The active-site Proton donor is Glu291. Catalysis depends on residues His312 and Lys426.

This sequence belongs to the GPI family.

The protein resides in the cytoplasm. The enzyme catalyses alpha-D-glucose 6-phosphate = beta-D-fructose 6-phosphate. It functions in the pathway carbohydrate biosynthesis; gluconeogenesis. The protein operates within carbohydrate degradation; glycolysis; D-glyceraldehyde 3-phosphate and glycerone phosphate from D-glucose: step 2/4. Functionally, catalyzes the reversible isomerization of glucose-6-phosphate to fructose-6-phosphate. The polypeptide is Glucose-6-phosphate isomerase (Clostridium perfringens (strain ATCC 13124 / DSM 756 / JCM 1290 / NCIMB 6125 / NCTC 8237 / Type A)).